Reading from the N-terminus, the 96-residue chain is Aspartyl/glutamyl-tRNA(Asn/Gln) amidotransferase subunit C (96 aa).

The protein belongs to the GatC family. Heterotrimer of A, B and C subunits.

The enzyme catalyses L-glutamyl-tRNA(Gln) + L-glutamine + ATP + H2O = L-glutaminyl-tRNA(Gln) + L-glutamate + ADP + phosphate + H(+). It catalyses the reaction L-aspartyl-tRNA(Asn) + L-glutamine + ATP + H2O = L-asparaginyl-tRNA(Asn) + L-glutamate + ADP + phosphate + 2 H(+). In terms of biological role, allows the formation of correctly charged Asn-tRNA(Asn) or Gln-tRNA(Gln) through the transamidation of misacylated Asp-tRNA(Asn) or Glu-tRNA(Gln) in organisms which lack either or both of asparaginyl-tRNA or glutaminyl-tRNA synthetases. The reaction takes place in the presence of glutamine and ATP through an activated phospho-Asp-tRNA(Asn) or phospho-Glu-tRNA(Gln). The chain is Aspartyl/glutamyl-tRNA(Asn/Gln) amidotransferase subunit C from Oceanobacillus iheyensis (strain DSM 14371 / CIP 107618 / JCM 11309 / KCTC 3954 / HTE831).